A 591-amino-acid chain; its full sequence is Aspartate--tRNA ligase (591 aa).

Position 176 (glutamate 176) interacts with L-aspartate. Positions 200–203 (QILK) are aspartate. Arginine 222 is an L-aspartate binding site. ATP contacts are provided by residues 222 to 224 (RDE) and glutamine 231. Histidine 450 contacts L-aspartate. Residue glutamate 484 coordinates ATP. Residue arginine 491 participates in L-aspartate binding. 536 to 539 (GLDR) lines the ATP pocket.

It belongs to the class-II aminoacyl-tRNA synthetase family. Type 1 subfamily. Homodimer.

It localises to the cytoplasm. It catalyses the reaction tRNA(Asp) + L-aspartate + ATP = L-aspartyl-tRNA(Asp) + AMP + diphosphate. Catalyzes the attachment of L-aspartate to tRNA(Asp) in a two-step reaction: L-aspartate is first activated by ATP to form Asp-AMP and then transferred to the acceptor end of tRNA(Asp). This is Aspartate--tRNA ligase from Listeria monocytogenes serovar 1/2a (strain ATCC BAA-679 / EGD-e).